Reading from the N-terminus, the 128-residue chain is MSTLVSLPTAAPAPDYQSIDRPLHFSVAAAAKVRELIQEEGNADLALRVYIQGGGCSGFQYGFEFDENRAEDDLAVVTDGVTLLVDPLSLQYLMGAEVDYTESLTGAQFVIRNPNAKTTCGCGSSFSV.

Residues Cys56, Cys120, and Cys122 each coordinate iron-sulfur cluster.

This sequence belongs to the HesB/IscA family. In terms of assembly, homodimer. Requires iron-sulfur cluster as cofactor.

Its function is as follows. Required for insertion of 4Fe-4S clusters for at least IspG. This is Iron-sulfur cluster insertion protein ErpA from Xanthomonas oryzae pv. oryzae (strain MAFF 311018).